A 522-amino-acid chain; its full sequence is Protein nucleotidyltransferase YdiU (522 aa).

The ATP site is built by glycine 109, glycine 111, arginine 112, lysine 132, aspartate 144, glycine 145, arginine 195, and arginine 202. The Proton acceptor role is filled by aspartate 271. The Mg(2+) site is built by asparagine 272 and aspartate 281. Aspartate 281 is a binding site for ATP.

This sequence belongs to the SELO family. It depends on Mg(2+) as a cofactor. Mn(2+) is required as a cofactor.

The catalysed reaction is L-seryl-[protein] + ATP = 3-O-(5'-adenylyl)-L-seryl-[protein] + diphosphate. It catalyses the reaction L-threonyl-[protein] + ATP = 3-O-(5'-adenylyl)-L-threonyl-[protein] + diphosphate. It carries out the reaction L-tyrosyl-[protein] + ATP = O-(5'-adenylyl)-L-tyrosyl-[protein] + diphosphate. The enzyme catalyses L-histidyl-[protein] + UTP = N(tele)-(5'-uridylyl)-L-histidyl-[protein] + diphosphate. The catalysed reaction is L-seryl-[protein] + UTP = O-(5'-uridylyl)-L-seryl-[protein] + diphosphate. It catalyses the reaction L-tyrosyl-[protein] + UTP = O-(5'-uridylyl)-L-tyrosyl-[protein] + diphosphate. Nucleotidyltransferase involved in the post-translational modification of proteins. It can catalyze the addition of adenosine monophosphate (AMP) or uridine monophosphate (UMP) to a protein, resulting in modifications known as AMPylation and UMPylation. This chain is Protein nucleotidyltransferase YdiU, found in Burkholderia multivorans (strain ATCC 17616 / 249).